Here is a 271-residue protein sequence, read N- to C-terminus: MASLEIIKLEWATPIFKVVEHSQDGLYILLQGQVSWQNSSQTYDLDEGNMLFLRRGSYAVRCGTKEPCQLLWIPLPGSFLSTFLHRFGSLLSEIRRDNSTPKPLLIFNISPILSQSIQNLCAILERSDFPSVLTQLRIEELLLLLAFSSQGTLFLSALRHLGNRPEERLQKFMEENYLQGWKLSKFAREFGMGLTTFKELFGTVYGISPRAWISERRILYAHQLLLNCKMSIVDIAMEAGFSSQSYFTQSYRRRFGCTPSQARLTKIATTG.

An HTH araC/xylS-type domain is found at 167 to 265 (ERLQKFMEEN…GCTPSQARLT (99 aa)). 2 DNA-binding regions (H-T-H motif) span residues 184–205 (SKFA…GTVY) and 232–255 (IVDI…RRRF).

Its function is as follows. Transcriptional activator of the Yersinia virulence regulon. This Yersinia enterocolitica serotype O:8 / biotype 1B (strain NCTC 13174 / 8081) protein is Virulence regulon transcriptional activator VirF (virF).